Consider the following 327-residue polypeptide: Cell division protein ZipA (327 aa).

Residues 1–5 lie on the Periplasmic side of the membrane; sequence MQDLR. A helical transmembrane segment spans residues 6 to 26; the sequence is LILIVVGAIAIIALLLHGLWT. The Cytoplasmic segment spans residues 27-327; that stretch reads SRKERSSLFR…REVLDANTIA (301 aa). A compositionally biased stretch (basic and acidic residues) spans 60-71; that stretch reads GEVRVRTSHPQE. The disordered stretch occupies residues 60–182; it reads GEVRVRTSHP…EPVAPAPEAK (123 aa). Polar residues-rich tracts occupy residues 94 to 103 and 163 to 173; these read KSAQVKTASR and APQQHVESQQE.

The protein belongs to the ZipA family. As to quaternary structure, interacts with FtsZ via their C-terminal domains.

It localises to the cell inner membrane. Essential cell division protein that stabilizes the FtsZ protofilaments by cross-linking them and that serves as a cytoplasmic membrane anchor for the Z ring. Also required for the recruitment to the septal ring of downstream cell division proteins. The sequence is that of Cell division protein ZipA from Yersinia pseudotuberculosis serotype O:1b (strain IP 31758).